The chain runs to 77 residues: Teretoxin Tsu15.4 (77 aa).

Positions 1-21 (MTKLTVLLLAILVLLPLATSN) are cleaved as a signal peptide. Positions 22-40 (SAADEALASLSGLLRRAKR) are excised as a propeptide.

Post-translationally, contains 4 disulfide bonds. As to expression, expressed by the venom duct.

The protein resides in the secreted. The chain is Teretoxin Tsu15.4 from Terebra subulata (Chocolate spotted auger).